A 472-amino-acid chain; its full sequence is 4-O-methyl-glucuronoyl methylesterase 1 (472 aa).

A signal peptide spans 1-20; that stretch reads MKSAAYLAALAAVLPAYVNA. The CBM1 domain occupies 21 to 56; it reads QAQEWGQCGGIGWTGATTCVSGTVCTVLNPYYSQCL. The segment at 62 to 97 is disordered; the sequence is TAPPPPPPPPTSVSSSSSSSTSSAPPSGPSGTSPTC. The span at 63–72 shows a compositional bias: pro residues; sequence APPPPPPPPT. Residues 73–96 show a composition bias toward low complexity; that stretch reads SVSSSSSSSTSSAPPSGPSGTSPT. Cystine bridges form between C97–C131, C283–C419, and C315–C391. The short motif at 282–287 is the GXSYXG catalytic site motif element; it reads GCSRDG. S284 functions as the Nucleophile in the catalytic mechanism. Substrate-binding residues include K288, Q330, E338, and W382. The active-site Proton donor/acceptor is H418. A glycan (N-linked (GlcNAc...) asparagine) is linked at N465.

It belongs to the carbohydrate esterase 15 (CE15) family.

The protein localises to the secreted. The enzyme catalyses a 4-O-methyl-alpha-D-glucuronosyl ester derivative + H2O = 4-O-methyl-alpha-D-glucuronate derivative + an alcohol + H(+). Glucuronoyl esterase which may play a significant role in biomass degradation, as it is considered to disconnect hemicellulose from lignin through the hydrolysis of the ester bond between 4-O-methyl-D-glucuronic acid residues of glucuronoxylans and aromatic alcohols of lignin. Can hydrolyze benzyl glucuronic acid (BnGlcA), allyl glucuronic acid (allylGlcA) and to a lower degree methyl glucuronic acid (MeGlcA) in vitro. In Phanerochaete chrysosporium (strain RP-78 / ATCC MYA-4764 / FGSC 9002) (White-rot fungus), this protein is 4-O-methyl-glucuronoyl methylesterase 1.